Consider the following 718-residue polypeptide: Polyribonucleotide nucleotidyltransferase (718 aa).

Positions 487 and 493 each coordinate Mg(2+). Residues 554–613 enclose the KH domain; that stretch reads PRIETFKIPTDKIREVIGTGGKVIREIVEKTGAKVNIEDDGTVKVASSDGESIKAAIKWI. The region spanning 623-691 is the S1 motif domain; that stretch reads GEIYEGTVVK…DRGKTRLSMR (69 aa). Residues 694–718 are disordered; it reads DQETGEDLEAKQKAEGEAPAQATGE.

It belongs to the polyribonucleotide nucleotidyltransferase family. Mg(2+) is required as a cofactor.

The protein localises to the cytoplasm. It carries out the reaction RNA(n+1) + phosphate = RNA(n) + a ribonucleoside 5'-diphosphate. Functionally, involved in mRNA degradation. Catalyzes the phosphorolysis of single-stranded polyribonucleotides processively in the 3'- to 5'-direction. The sequence is that of Polyribonucleotide nucleotidyltransferase from Rhodopseudomonas palustris (strain HaA2).